A 382-amino-acid chain; its full sequence is Dihydroflavonol 4-reductase (382 aa).

Positions 44 and 163 each coordinate NADP(+).

It belongs to the NAD(P)-dependent epimerase/dehydratase family. Dihydroflavonol-4-reductase subfamily.

The enzyme catalyses a (2R,3S,4S)-leucoanthocyanidin + NADP(+) = a (2R,3R)-dihydroflavonol + NADPH + H(+). It catalyses the reaction (2S)-flavan-4-ol + NADP(+) = (2S)-flavanone + NADPH + H(+). The protein operates within pigment biosynthesis; anthocyanin biosynthesis. Its function is as follows. Bifunctional enzyme involved in flavonoid metabolism. This is Dihydroflavonol 4-reductase (DFRA) from Arabidopsis thaliana (Mouse-ear cress).